A 346-amino-acid chain; its full sequence is Ly6/PLAUR domain-containing protein 3 (346 aa).

A signal peptide spans 1 to 30 (MDPARKAGAQAMIWTAGWLLLLLLRGGAQA). UPAR/Ly6 domains lie at 33-126 (CYSC…ALDP) and 140-222 (CYSC…SRCN). Residues Asn-118, Asn-163, Asn-176, and Asn-183 are each glycosylated (N-linked (GlcNAc...) asparagine). The tract at residues 233–324 (PRIPPLVRLP…KGGPQQPHNK (92 aa)) is disordered. Residues 234-246 (RIPPLVRLPPPEP) show a composition bias toward pro residues. The segment covering 247–269 (TTVASTTSVTTSTSAPVRPTSTT) has biased composition (low complexity). A compositionally biased stretch (basic and acidic residues) spans 283-295 (GVEHEASRDEEPR). A lipid anchor (GPI-anchor amidated cysteine) is attached at Cys-326. A propeptide spans 327–346 (VAPTAGLAALLLAVAAGVLL) (removed in mature form).

As to quaternary structure, binds laminin-1 and laminin-5. Interacts with LGALS3. Interacts with AGR2 and AGR3. N-glycosylated and O-glycosylated. In terms of tissue distribution, expressed in placenta, skin and urothelium. Found in suprabasal keratinocytes of chronic wounds. Weak expression is found in esophagus and peripheral blood mononuclear cells. Found in the majority of primary and metastatic transitional cell carcinomas (TCCs) and as well in breast cancer tissues, but not in adjacent normal tissues. High expression is found in the tumor component of some noninvasive superficial lesions and in invasive and metastatic urothelial cancers.

Its subcellular location is the cell membrane. Its function is as follows. Supports cell migration. May be involved in urothelial cell-matrix interactions. May be involved in tumor progression. The protein is Ly6/PLAUR domain-containing protein 3 (LYPD3) of Homo sapiens (Human).